Consider the following 142-residue polypeptide: Large ribosomal subunit protein uL23 (142 aa).

Residue Lys61 forms a Glycyl lysine isopeptide (Lys-Gly) (interchain with G-Cter in SUMO) linkage.

This sequence belongs to the universal ribosomal protein uL23 family. As to quaternary structure, component of the large ribosomal subunit (LSU). Mature yeast ribosomes consist of a small (40S) and a large (60S) subunit. The 40S small subunit contains 1 molecule of ribosomal RNA (18S rRNA) and 33 different proteins (encoded by 57 genes). The large 60S subunit contains 3 rRNA molecules (25S, 5.8S and 5S rRNA) and 46 different proteins (encoded by 81 genes). uL23 is associated with the polypeptide exit tunnel.

It localises to the cytoplasm. Functionally, component of the ribosome, a large ribonucleoprotein complex responsible for the synthesis of proteins in the cell. The small ribosomal subunit (SSU) binds messenger RNAs (mRNAs) and translates the encoded message by selecting cognate aminoacyl-transfer RNA (tRNA) molecules. The large subunit (LSU) contains the ribosomal catalytic site termed the peptidyl transferase center (PTC), which catalyzes the formation of peptide bonds, thereby polymerizing the amino acids delivered by tRNAs into a polypeptide chain. The nascent polypeptides leave the ribosome through a tunnel in the LSU and interact with protein factors that function in enzymatic processing, targeting, and the membrane insertion of nascent chains at the exit of the ribosomal tunnel. uL23 is a major component of the universal docking site for these factors at the polypeptide exit tunnel. The sequence is that of Large ribosomal subunit protein uL23 from Saccharomyces cerevisiae (strain ATCC 204508 / S288c) (Baker's yeast).